The following is a 916-amino-acid chain: Translation initiation factor IF-2 (916 aa).

The disordered stretch occupies residues 58–317; it reads LEAEGHLPGA…GVTVPRGDGG (260 aa). The span at 120–142 shows a compositional bias: low complexity; that stretch reads EKVAASEAADAKPAAGAPADTAK. Over residues 195–206 the composition is skewed to pro residues; sequence SNIPRPAPPRPG. 2 stretches are compositionally biased toward gly residues: residues 214-227 and 235-282; these read RPGG…GGRP and SAGG…GRGG. Over residues 283 to 294 the composition is skewed to basic residues; sequence GKSKARKSKRAK. The 175-residue stretch at 409–583 folds into the tr-type G domain; it reads IRPPVVTVMG…LTADAGLDLR (175 aa). The segment at 418–425 is G1; that stretch reads GHVDHGKT. Residue 418–425 coordinates GTP; the sequence is GHVDHGKT. Residues 443–447 are G2; that stretch reads GITQH. Positions 468–471 are G3; that stretch reads DTPG. GTP contacts are provided by residues 468 to 472 and 522 to 525; these read DTPGH and NKVD. Residues 522–525 form a G4 region; the sequence is NKVD. The interval 558-560 is G5; that stretch reads SAR.

It belongs to the TRAFAC class translation factor GTPase superfamily. Classic translation factor GTPase family. IF-2 subfamily.

The protein resides in the cytoplasm. One of the essential components for the initiation of protein synthesis. Protects formylmethionyl-tRNA from spontaneous hydrolysis and promotes its binding to the 30S ribosomal subunits. Also involved in the hydrolysis of GTP during the formation of the 70S ribosomal complex. In Leifsonia xyli subsp. xyli (strain CTCB07), this protein is Translation initiation factor IF-2.